We begin with the raw amino-acid sequence, 161 residues long: MDIPKQYLSLFILIIFITTKLSQADHKNDIPVPNDPSSTNSVFPTSKRTVEINNDLGNQLTLLYHCKSKDDDLGNRTLQPGESWSFSFGRQFFGRTLYFCSFSWPNESHSFDIYKDHRDSGGDNKCESDRCVWKIRRNGPCRFNDETKQFDLCYPWNKSLY.

The signal sequence occupies residues 1-24; that stretch reads MDIPKQYLSLFILIIFITTKLSQA. 3 N-linked (GlcNAc...) asparagine glycosylation sites follow: asparagine 75, asparagine 106, and asparagine 157.

The protein belongs to the plant self-incompatibility (S1) protein family.

Its subcellular location is the secreted. This chain is S-protein homolog 2, found in Arabidopsis thaliana (Mouse-ear cress).